The following is a 149-amino-acid chain: 3-dehydroquinate dehydratase (149 aa).

The active-site Proton acceptor is the Tyr-26. The substrate site is built by Asn-77, His-83, and Asp-90. The active-site Proton donor is the His-103. Residues 104-105 (LS) and Arg-114 contribute to the substrate site.

This sequence belongs to the type-II 3-dehydroquinase family. As to quaternary structure, homododecamer.

The catalysed reaction is 3-dehydroquinate = 3-dehydroshikimate + H2O. It functions in the pathway metabolic intermediate biosynthesis; chorismate biosynthesis; chorismate from D-erythrose 4-phosphate and phosphoenolpyruvate: step 3/7. Catalyzes a trans-dehydration via an enolate intermediate. The protein is 3-dehydroquinate dehydratase of Psychromonas ingrahamii (strain DSM 17664 / CCUG 51855 / 37).